A 180-amino-acid chain; its full sequence is UPF0340 protein RBAM_034070 (180 aa).

Belongs to the UPF0340 family.

The protein is UPF0340 protein RBAM_034070 of Bacillus velezensis (strain DSM 23117 / BGSC 10A6 / LMG 26770 / FZB42) (Bacillus amyloliquefaciens subsp. plantarum).